Consider the following 47-residue polypeptide: uncharacterized protein (47 aa).

The tract at residues 24-47 (FGPNPIEPPTDIAPDPDSTKTWLI) is disordered.

This is an uncharacterized protein from Mycobacterium tuberculosis (strain ATCC 25618 / H37Rv).